The primary structure comprises 492 residues: Bifunctional protein GlmU (492 aa).

Residues 1-241 (MIPENTGPAA…RWQVEGANDR (241 aa)) are pyrophosphorylase. Residues 14–17 (LAAG), K28, Q81, 86–87 (GT), 112–114 (YGD), G151, E166, N181, and N239 each bind UDP-N-acetyl-alpha-D-glucosamine. A Mg(2+)-binding site is contributed by D114. Position 239 (N239) interacts with Mg(2+). The linker stretch occupies residues 242-262 (VQLAALGAELNRRTVEAWMRA). An N-acetyltransferase region spans residues 263-492 (GVTVVDPSTT…STPASTEEGK (230 aa)). R344 and K362 together coordinate UDP-N-acetyl-alpha-D-glucosamine. H374 acts as the Proton acceptor in catalysis. Residues Y377 and N388 each coordinate UDP-N-acetyl-alpha-D-glucosamine. Acetyl-CoA is bound by residues 397–398 (NY), S416, and A434. Residues 460 to 492 (WVPANRPGSRSAELAQAAINNSSSTPASTEEGK) are disordered. Over residues 477-492 (AINNSSSTPASTEEGK) the composition is skewed to polar residues.

The protein in the N-terminal section; belongs to the N-acetylglucosamine-1-phosphate uridyltransferase family. In the C-terminal section; belongs to the transferase hexapeptide repeat family. Homotrimer. Mg(2+) is required as a cofactor.

The protein resides in the cytoplasm. The catalysed reaction is alpha-D-glucosamine 1-phosphate + acetyl-CoA = N-acetyl-alpha-D-glucosamine 1-phosphate + CoA + H(+). It carries out the reaction N-acetyl-alpha-D-glucosamine 1-phosphate + UTP + H(+) = UDP-N-acetyl-alpha-D-glucosamine + diphosphate. It participates in nucleotide-sugar biosynthesis; UDP-N-acetyl-alpha-D-glucosamine biosynthesis; N-acetyl-alpha-D-glucosamine 1-phosphate from alpha-D-glucosamine 6-phosphate (route II): step 2/2. Its pathway is nucleotide-sugar biosynthesis; UDP-N-acetyl-alpha-D-glucosamine biosynthesis; UDP-N-acetyl-alpha-D-glucosamine from N-acetyl-alpha-D-glucosamine 1-phosphate: step 1/1. The protein operates within bacterial outer membrane biogenesis; LPS lipid A biosynthesis. Functionally, catalyzes the last two sequential reactions in the de novo biosynthetic pathway for UDP-N-acetylglucosamine (UDP-GlcNAc). The C-terminal domain catalyzes the transfer of acetyl group from acetyl coenzyme A to glucosamine-1-phosphate (GlcN-1-P) to produce N-acetylglucosamine-1-phosphate (GlcNAc-1-P), which is converted into UDP-GlcNAc by the transfer of uridine 5-monophosphate (from uridine 5-triphosphate), a reaction catalyzed by the N-terminal domain. The polypeptide is Bifunctional protein GlmU (Pseudarthrobacter chlorophenolicus (strain ATCC 700700 / DSM 12829 / CIP 107037 / JCM 12360 / KCTC 9906 / NCIMB 13794 / A6) (Arthrobacter chlorophenolicus)).